Reading from the N-terminus, the 426-residue chain is Glutamyl-tRNA reductase (426 aa).

Substrate contacts are provided by residues T49–R52, S109, E114–Q116, and Q120. The Nucleophile role is filled by C50. G189–G194 contacts NADP(+).

This sequence belongs to the glutamyl-tRNA reductase family. Homodimer.

The catalysed reaction is (S)-4-amino-5-oxopentanoate + tRNA(Glu) + NADP(+) = L-glutamyl-tRNA(Glu) + NADPH + H(+). It participates in porphyrin-containing compound metabolism; protoporphyrin-IX biosynthesis; 5-aminolevulinate from L-glutamyl-tRNA(Glu): step 1/2. Its pathway is porphyrin-containing compound metabolism; chlorophyll biosynthesis. Catalyzes the NADPH-dependent reduction of glutamyl-tRNA(Glu) to glutamate 1-semialdehyde (GSA). This chain is Glutamyl-tRNA reductase, found in Chlorobium chlorochromatii (strain CaD3).